Here is a 519-residue protein sequence, read N- to C-terminus: ATP synthase subunit beta, mitochondrial (519 aa).

An ATP-binding site is contributed by 195–202 (GGAGVGKT).

It belongs to the ATPase alpha/beta chains family. In terms of assembly, F-type ATPases have 2 components, CF(1) - the catalytic core - and CF(0) - the membrane proton channel. CF(1) has five subunits: alpha(3), beta(3), gamma(1), delta(1), epsilon(1). CF(0) has three main subunits: a, b and c.

It localises to the mitochondrion. It is found in the mitochondrion inner membrane. The enzyme catalyses ATP + H2O + 4 H(+)(in) = ADP + phosphate + 5 H(+)(out). Mitochondrial membrane ATP synthase (F(1)F(0) ATP synthase or Complex V) produces ATP from ADP in the presence of a proton gradient across the membrane which is generated by electron transport complexes of the respiratory chain. F-type ATPases consist of two structural domains, F(1) - containing the extramembraneous catalytic core, and F(0) - containing the membrane proton channel, linked together by a central stalk and a peripheral stalk. During catalysis, ATP synthesis in the catalytic domain of F(1) is coupled via a rotary mechanism of the central stalk subunits to proton translocation. Subunits alpha and beta form the catalytic core in F(1). Rotation of the central stalk against the surrounding alpha(3)beta(3) subunits leads to hydrolysis of ATP in three separate catalytic sites on the beta subunits. This chain is ATP synthase subunit beta, mitochondrial (atp-2), found in Neurospora crassa (strain ATCC 24698 / 74-OR23-1A / CBS 708.71 / DSM 1257 / FGSC 987).